Reading from the N-terminus, the 316-residue chain is Pantothenate kinase (316 aa).

95-102 (GSVAVGKS) provides a ligand contact to ATP.

Belongs to the prokaryotic pantothenate kinase family.

The protein localises to the cytoplasm. It carries out the reaction (R)-pantothenate + ATP = (R)-4'-phosphopantothenate + ADP + H(+). It functions in the pathway cofactor biosynthesis; coenzyme A biosynthesis; CoA from (R)-pantothenate: step 1/5. The polypeptide is Pantothenate kinase (Shewanella sediminis (strain HAW-EB3)).